The sequence spans 303 residues: MGNDQADKKKFSWVIKNFSSLQSEKIYSDQFVIDGCRWRLLAFPKGNDTKSDHLSLYLDVAESESLPCGWRRHAQFSFTIVNHIPEKCSQRKETIHWFCEKVSDWGFTNLVPLIELKAEDSGFLVKGELKIVVEIEVLEVIGLLNVSESESMDVNGFHVLPSQAKYVKSLFEIHPDIATKFRIKNQYLKTGYMNVLLCLIETVRRSPKEISKNDLADAYVALESLTDHGFKLDWLKKKLDQVTQKKEKEAAGETRMHEIGEELKDLKLKCSDLEAQLDKEKADVLAAIAPLGSSDDGVFDDFF.

One can recognise an MATH domain in the interval 8–135 (KKKFSWVIKN…KGELKIVVEI (128 aa)). Positions 231 to 287 (KLDWLKKKLDQVTQKKEKEAAGETRMHEIGEELKDLKLKCSDLEAQLDKEKADVLAA) form a coiled coil.

This chain is MATH domain and coiled-coil domain-containing protein At3g58250, found in Arabidopsis thaliana (Mouse-ear cress).